The sequence spans 793 residues: Protocadherin beta-7 (793 aa).

The first 26 residues, 1–26 (MEARVERAVQKRQVLFLCVFLGMSWA), serve as a signal peptide directing secretion. Over 27 to 688 (GAEPLRYFVA…DQANSLTVYL (662 aa)) the chain is Extracellular. Cadherin domains lie at 35–133 (VAEE…APVF), 138–242 (ISLK…APDF), 247–347 (YKVQ…RPEL), 352–451 (LTSP…APAF), and 456–561 (YTLF…SPFV). Asn-169 is a glycosylation site (N-linked (GlcNAc...) asparagine). N-linked (GlcNAc...) asparagine glycosylation is found at Asn-418 and Asn-436. N-linked (GlcNAc...) asparagine glycosylation is present at Asn-567. The Cadherin 6 domain maps to 568–671 (SSAPCTEPLP…LVDGFSQPYL (104 aa)). Residues 689–709 (VVALASVSSLFLLSVLLFVAV) form a helical membrane-spanning segment. At 710-793 (RLCRRSRAAP…NRPFQNNLGF (84 aa)) the chain is on the cytoplasmic side.

Its subcellular location is the cell membrane. Potential calcium-dependent cell-adhesion protein. May be involved in the establishment and maintenance of specific neuronal connections in the brain. This Homo sapiens (Human) protein is Protocadherin beta-7 (PCDHB7).